The following is a 306-amino-acid chain: Ornithine carbamoyltransferase (306 aa).

Carbamoyl phosphate-binding positions include serine 53 to threonine 56, glutamine 80, arginine 104, and histidine 131 to glutamine 134. L-ornithine is bound by residues asparagine 162, aspartate 219, and serine 223–methionine 224. Carbamoyl phosphate is bound by residues cysteine 259–leucine 260 and arginine 287.

The protein belongs to the aspartate/ornithine carbamoyltransferase superfamily. OTCase family.

The protein localises to the cytoplasm. It catalyses the reaction carbamoyl phosphate + L-ornithine = L-citrulline + phosphate + H(+). It functions in the pathway amino-acid biosynthesis; L-arginine biosynthesis; L-arginine from L-ornithine and carbamoyl phosphate: step 1/3. In terms of biological role, reversibly catalyzes the transfer of the carbamoyl group from carbamoyl phosphate (CP) to the N(epsilon) atom of ornithine (ORN) to produce L-citrulline. The protein is Ornithine carbamoyltransferase of Pseudomonas syringae pv. tomato (strain ATCC BAA-871 / DC3000).